The sequence spans 246 residues: Azurocidin (246 aa).

The N-terminal stretch at 1–19 (MPALRFLALLASLLATSRV) is a signal peptide. Positions 20-26 (GLATLAD) are excised as a propeptide. One can recognise a Peptidase S1 domain in the interval 27–242 (IVGGRRAQPQ…FRNWIDSVLN (216 aa)). Cysteines 52 and 68 form a disulfide. N-linked (GlcNAc...) asparagine glycosylation is found at Asn139 and Asn170. Disulfide bonds link Cys148-Cys205 and Cys178-Cys184. Residues 245 to 246 (PA) constitute a propeptide that is removed on maturation.

The protein belongs to the peptidase S1 family. Elastase subfamily.

It is found in the cytoplasmic granule membrane. In terms of biological role, this is a neutrophil granule-derived antibacterial and monocyte- and fibroblast-specific chemotactic glycoprotein. Binds heparin. The protein is Azurocidin of Sus scrofa (Pig).